A 337-amino-acid polypeptide reads, in one-letter code: MVMLDHPLAVTMGDPSGIGPEIIAKMYLRRPDKRNWIVVGDPLVMEHAIANLGVAVQIRRIATVEEAGCEDGVLNVLASSSLATLPAVGRVSAVSGQAAYDAIVTAIGLARQGTIRGIVTAPIHKEALAAAGIHYPGHTEILAEQGGAQHVAMMLANDEIRTVLVTIHCSLADAIRKADFPAQMQAIRLAHEGARALGIVQPRIAVAGLNPHAGEGGLFGDEEIRIITPAIAAARAEGIDATGPWPGDTVFMQARLGKFDVVVAQYHDQGLIPVKFMGLEKGVNITLGLPFVRTSPDHGTAFDIAGRGIADSSSLETAFDYATRLKVPTPFFSGAMS.

Residues histidine 138 and threonine 139 each contribute to the substrate site. A divalent metal cation is bound by residues histidine 168, histidine 212, and histidine 267. Substrate is bound by residues lysine 275, asparagine 284, and arginine 293.

This sequence belongs to the PdxA family. Homodimer. Zn(2+) serves as cofactor. It depends on Mg(2+) as a cofactor. The cofactor is Co(2+).

It is found in the cytoplasm. The enzyme catalyses 4-(phosphooxy)-L-threonine + NAD(+) = 3-amino-2-oxopropyl phosphate + CO2 + NADH. The protein operates within cofactor biosynthesis; pyridoxine 5'-phosphate biosynthesis; pyridoxine 5'-phosphate from D-erythrose 4-phosphate: step 4/5. Its function is as follows. Catalyzes the NAD(P)-dependent oxidation of 4-(phosphooxy)-L-threonine (HTP) into 2-amino-3-oxo-4-(phosphooxy)butyric acid which spontaneously decarboxylates to form 3-amino-2-oxopropyl phosphate (AHAP). The sequence is that of 4-hydroxythreonine-4-phosphate dehydrogenase from Beijerinckia indica subsp. indica (strain ATCC 9039 / DSM 1715 / NCIMB 8712).